The primary structure comprises 771 residues: PH and SEC7 domain-containing protein 2 (771 aa).

2 disordered regions span residues 1 to 67 (MEED…PDVA) and 107 to 136 (GDNA…VRDG). A compositionally biased stretch (basic and acidic residues) spans 47-66 (GHERRGTPADTEEPTKDPDV). Phosphoserine is present on Ser-191. Disordered stretches follow at residues 207–230 (GDMG…SSSR) and 244–307 (PNGF…ANGC). A compositionally biased stretch (low complexity) spans 218-230 (LGSPLRRSISSSR). Positions 257–266 (GDEDDDEEDT) are enriched in acidic residues. The 203-residue stretch at 260–462 (DDDEEDTDKL…KTLYNSIKNE (203 aa)) folds into the SEC7 domain. The span at 288-299 (ELSSSEGLEPGS) shows a compositional bias: low complexity. Residues 512–625 (TTYKHGVLTR…WILRINLVAA (114 aa)) form the PH domain. The chain crosses the membrane as a helical span at residues 622–639 (LVAAIFSAPAFPAAVSSM). Residues 651–680 (TTRLCQEEQLRSHENKLRQLTAELAEHRCH) adopt a coiled-coil conformation. Residues 739–771 (DDPSLRKTHSSPALSQGHVTGSKTTKDATGPDT) are disordered. Over residues 748-761 (SSPALSQGHVTGSK) the composition is skewed to polar residues.

This sequence belongs to the PSD family.

Its subcellular location is the cell membrane. The protein resides in the cell projection. It is found in the ruffle membrane. It localises to the cleavage furrow. The polypeptide is PH and SEC7 domain-containing protein 2 (PSD2) (Homo sapiens (Human)).